A 408-amino-acid chain; its full sequence is Aminoacylase-1A (408 aa).

H80 serves as a coordination point for Zn(2+). Residue D82 is part of the active site. Residue D113 participates in Zn(2+) binding. The active-site Proton acceptor is the E147. 3 residues coordinate Zn(2+): E148, E175, and H373. A Phosphoserine modification is found at S408.

The protein belongs to the peptidase M20A family. In terms of assembly, homodimer. The cofactor is Zn(2+). Post-translationally, the N-terminus is blocked.

It localises to the cytoplasm. The catalysed reaction is an N-acyl-L-amino acid + H2O = an L-alpha-amino acid + a carboxylate. The enzyme catalyses an N-acetyl-L-cysteine-S-conjugate + H2O = an S-substituted L-cysteine + acetate. In terms of biological role, involved in the hydrolysis of N-acylated or N-acetylated amino acids (except L-aspartate). This chain is Aminoacylase-1A (Acy1a), found in Rattus norvegicus (Rat).